A 401-amino-acid polypeptide reads, in one-letter code: Nodal homolog 3-A (401 aa).

The first 18 residues, 1–18 (MAFLSLFLCLVFSSPLMA), serve as a signal peptide directing secretion. A propeptide spanning residues 19–274 (MPPALQGRKA…KVNGFRRLRR (256 aa)) is cleaved from the precursor. N-linked (GlcNAc...) asparagine glycosylation is found at Asn168, Asn337, and Asn344. Intrachain disulfides connect Cys299–Cys365 and Cys328–Cys396.

This sequence belongs to the TGF-beta family. As to quaternary structure, monomer. The propeptide region interacts with bmp4 in a non-covalent manner. Expressed in the dorsal marginal region of late blastula, becoming restricted to the Spemann organizer at the early gastrula stage.

It localises to the secreted. Exhibits mesoderm-dorsalizing activity and neural-inducing activity, but lacks mesoderm-inducing activity. Regulates the expression of specific mesodermal and neural genes. Induces convergent extension movements at the embryonic midline by activating the fgf signaling pathway to induce t/bra expression in the organizer region. Acts with wnt11 to induce Spemann organizer cells and induce axis formation. The unprocessed protein antagonizes bmp-signaling. In Xenopus tropicalis (Western clawed frog), this protein is Nodal homolog 3-A.